A 218-amino-acid chain; its full sequence is Cytidylate kinase (218 aa).

10 to 18 provides a ligand contact to ATP; it reads GPAAAGKST.

The protein belongs to the cytidylate kinase family. Type 1 subfamily.

It is found in the cytoplasm. The enzyme catalyses CMP + ATP = CDP + ADP. The catalysed reaction is dCMP + ATP = dCDP + ADP. The protein is Cytidylate kinase of Staphylococcus haemolyticus (strain JCSC1435).